A 446-amino-acid chain; its full sequence is Enolase 1 (446 aa).

2 residues coordinate substrate: His164 and Glu173. Glu216 functions as the Proton donor in the catalytic mechanism. Positions 251, 302, and 329 each coordinate Mg(2+). The substrate site is built by Glu302 and Asp329. Lys354 functions as the Proton acceptor in the catalytic mechanism. Substrate contacts are provided by residues 381-384 (SHRS) and Lys405.

The protein belongs to the enolase family. As to quaternary structure, homodimer. Mg(2+) is required as a cofactor.

The protein resides in the cytoplasm. It catalyses the reaction (2R)-2-phosphoglycerate = phosphoenolpyruvate + H2O. It participates in carbohydrate degradation; glycolysis; pyruvate from D-glyceraldehyde 3-phosphate: step 4/5. The chain is Enolase 1 (ENO1) from Zea mays (Maize).